The sequence spans 189 residues: Parkinson disease protein 7 (189 aa).

Ala2 is modified (N-acetylalanine). S-palmitoyl cysteine attachment occurs at residues Cys46 and Cys53. Tyr67 bears the Phosphotyrosine mark. The active-site Nucleophile is Cys106. Cys106 carries the cysteine sulfinic acid (-SO2H); alternate modification. Cys106 is lipidated: S-palmitoyl cysteine; alternate. Residue His126 is part of the active site. Lys130 is covalently cross-linked (Glycyl lysine isopeptide (Lys-Gly) (interchain with G-Cter in SUMO)). N6-acetyllysine is present on Lys148. Position 182 is an N6-succinyllysine (Lys182).

It belongs to the peptidase C56 family. As to quaternary structure, homodimer. Binds EFCAB6/DJBP and PIAS2. Part of a ternary complex containing PARK7, EFCAB6/DJBP and AR. Interacts (via N-terminus) with OTUD7B. Interacts with BBS1, HIPK1, CLCF1 and MTERF. Forms a complex with PINK1 and PRKN. Interacts (via C-terminus) with NCF1; the interaction is enhanced by LPS and modulates NCF1 phosphorylation and membrane translocation. Interacts with NENF. The cofactor is Deglycase activity does not require glutathione as a cofactor, however, glycated glutathione constitutes a PARK7 substrate.. Sumoylated on Lys-130 by PIAS2 or PIAS4; which is enhanced after ultraviolet irradiation and essential for cell-growth promoting activity and transforming activity. In terms of processing, cys-106 is easily oxidized to sulfinic acid. Post-translationally, undergoes cleavage of a C-terminal peptide and subsequent activation of protease activity in response to oxidative stress. In terms of tissue distribution, highly expressed in pancreas, kidney, skeletal muscle, liver, testis and heart. Detected at slightly lower levels in placenta and brain (at protein level). Detected in astrocytes, Sertoli cells, spermatogonia, spermatids and spermatozoa. Expressed by pancreatic islets at higher levels than surrounding exocrine tissues.

The protein localises to the cell membrane. It localises to the cytoplasm. The protein resides in the nucleus. Its subcellular location is the membrane raft. It is found in the mitochondrion. The protein localises to the endoplasmic reticulum. It carries out the reaction N(omega)-(1-hydroxy-2-oxopropyl)-L-arginyl-[protein] + H2O = lactate + L-arginyl-[protein] + H(+). The enzyme catalyses N(6)-(1-hydroxy-2-oxopropyl)-L-lysyl-[protein] + H2O = lactate + L-lysyl-[protein] + H(+). It catalyses the reaction S-(1-hydroxy-2-oxopropyl)-L-cysteinyl-[protein] + H2O = lactate + L-cysteinyl-[protein] + H(+). The catalysed reaction is N(omega)-(1-hydroxy-2-oxoethyl)-L-arginyl-[protein] + H2O = L-arginyl-[protein] + glycolate + H(+). It carries out the reaction N(6)-(1-hydroxy-2-oxoethyl)-L-lysyl-[protein] + H2O = glycolate + L-lysyl-[protein] + H(+). The enzyme catalyses S-(1-hydroxy-2-oxoethyl)-L-cysteinyl-[protein] + H2O = glycolate + L-cysteinyl-[protein] + H(+). It catalyses the reaction N(2)-(1-hydroxy-2-oxopropyl)-dGTP + H2O = lactate + dGTP + H(+). The catalysed reaction is N(2)-(1-hydroxy-2-oxopropyl)-GTP + H2O = lactate + GTP + H(+). It carries out the reaction N(2)-(1-hydroxy-2-oxopropyl)-GDP + H2O = lactate + GDP + H(+). The enzyme catalyses N(2)-(1-hydroxy-2-oxopropyl)-GMP + H2O = lactate + GMP + H(+). It catalyses the reaction N(2)-(1-hydroxy-2-oxoethyl)-dGTP + H2O = dGTP + glycolate + H(+). The catalysed reaction is N(2)-(1-hydroxy-2-oxoethyl)-GTP + H2O = glycolate + GTP + H(+). It carries out the reaction N(2)-(1-hydroxy-2-oxoethyl)-GDP + H2O = glycolate + GDP + H(+). The enzyme catalyses N(2)-(1-hydroxy-2-oxoethyl)-GMP + H2O = glycolate + GMP + H(+). It catalyses the reaction an N(2)-(1-hydroxy-2-oxopropyl)-guanosine in RNA + H2O = a guanosine in RNA + lactate + H(+). The catalysed reaction is an N(2)-(1-hydroxy-2-oxopropyl)-2'-deoxyguanosine in DNA + H2O = a 2'-deoxyguanosine in DNA + lactate + H(+). It carries out the reaction an N(2)-(1-hydroxy-2-oxoethyl)-guanosine in RNA + H2O = a guanosine in RNA + glycolate + H(+). The enzyme catalyses an N(2)-(1-hydroxy-2-oxoethyl)-2'-deoxyguanosine in DNA + H2O = a 2'-deoxyguanosine in DNA + glycolate + H(+). In terms of biological role, multifunctional protein with controversial molecular function which plays an important role in cell protection against oxidative stress and cell death acting as oxidative stress sensor and redox-sensitive chaperone and protease. It is involved in neuroprotective mechanisms like the stabilization of NFE2L2 and PINK1 proteins, male fertility as a positive regulator of androgen signaling pathway as well as cell growth and transformation through, for instance, the modulation of NF-kappa-B signaling pathway. Has been described as a protein and nucleotide deglycase that catalyzes the deglycation of the Maillard adducts formed between amino groups of proteins or nucleotides and reactive carbonyl groups of glyoxals. But this function is rebuted by other works. As a protein deglycase, repairs methylglyoxal- and glyoxal-glycated proteins, and releases repaired proteins and lactate or glycolate, respectively. Deglycates cysteine, arginine and lysine residues in proteins, and thus reactivates these proteins by reversing glycation by glyoxals. Acts on early glycation intermediates (hemithioacetals and aminocarbinols), preventing the formation of advanced glycation endproducts (AGE) that cause irreversible damage. Also functions as a nucleotide deglycase able to repair glycated guanine in the free nucleotide pool (GTP, GDP, GMP, dGTP) and in DNA and RNA. Is thus involved in a major nucleotide repair system named guanine glycation repair (GG repair), dedicated to reversing methylglyoxal and glyoxal damage via nucleotide sanitization and direct nucleic acid repair. Protects histones from adduction by methylglyoxal, controls the levels of methylglyoxal-derived argininine modifications on chromatin. Able to remove the glycations and restore histone 3, histone glycation disrupts both local and global chromatin architecture by altering histone-DNA interactions as well as histone acetylation and ubiquitination levels. Displays a very low glyoxalase activity that may reflect its deglycase activity. Eliminates hydrogen peroxide and protects cells against hydrogen peroxide-induced cell death. Required for correct mitochondrial morphology and function as well as for autophagy of dysfunctional mitochondria. Plays a role in regulating expression or stability of the mitochondrial uncoupling proteins SLC25A14 and SLC25A27 in dopaminergic neurons of the substantia nigra pars compacta and attenuates the oxidative stress induced by calcium entry into the neurons via L-type channels during pacemaking. Regulates astrocyte inflammatory responses, may modulate lipid rafts-dependent endocytosis in astrocytes and neuronal cells. In pancreatic islets, involved in the maintenance of mitochondrial reactive oxygen species (ROS) levels and glucose homeostasis in an age- and diet dependent manner. Protects pancreatic beta cells from cell death induced by inflammatory and cytotoxic setting. Binds to a number of mRNAs containing multiple copies of GG or CC motifs and partially inhibits their translation but dissociates following oxidative stress. Metal-binding protein able to bind copper as well as toxic mercury ions, enhances the cell protection mechanism against induced metal toxicity. In macrophages, interacts with the NADPH oxidase subunit NCF1 to direct NADPH oxidase-dependent ROS production, and protects against sepsis. This chain is Parkinson disease protein 7, found in Homo sapiens (Human).